A 452-amino-acid chain; its full sequence is Tol-Pal system protein TolB (452 aa).

The first 31 residues, Met-1–Gly-31, serve as a signal peptide directing secretion.

This sequence belongs to the TolB family. The Tol-Pal system is composed of five core proteins: the inner membrane proteins TolA, TolQ and TolR, the periplasmic protein TolB and the outer membrane protein Pal. They form a network linking the inner and outer membranes and the peptidoglycan layer.

It is found in the periplasm. Part of the Tol-Pal system, which plays a role in outer membrane invagination during cell division and is important for maintaining outer membrane integrity. This is Tol-Pal system protein TolB from Syntrophus aciditrophicus (strain SB).